A 612-amino-acid chain; its full sequence is MGNVCIGPRRNFAKNGLLGILRPRHAAPSSPSQPTTTSRSIPVVLPSAPSSKPPPPTQTAPPVPVVISEPPPPQPQPEPQPAAPSQPPPPQEQPSPPPPASSNTTQQPPPPQQRQQSRAKKPAHIKRISSAGLQVESVLRRKTENLKDKYSLGRKLGQGQFGTTYLCVDKANGGEYACKSIAKRKLLTDEDVEDVRREIQIMHHLAGHPNIISIRGAYEDAVAVHVVMELCAGGELFDRIVRKGHYTERQAAGLARVIVAVVESCHSLGVMHRDLKPENFLFVGNEEDAPLKTIDFGLSMFFRPGEVFTDVVGSPYYVAPEVLKKSYGQEADVWSAGVIIYILLCGVPPFWAETEQGIFEQVLHGTLDFESDPWPNVSDGAKDLLRKVLVRDPKKRLTAHEVLCHPWLQMSGSAPDKPLDSAVLSRLRQFSAMNKLKKMALRVIAENLSEEEIAGLKEMFKMMDTDNSGQINYEELKAGLERVGANMKESEIYQLMQAADIDNSGTIDYGEFIAATLHLNKVEREDHLYAAFQYFDKDGSGYITSDELQQACDEFGIEDVRLEDMIGEVDQDNDGRIDYNEFVAMMQKTTTGFGKKGGHNFSGFRDALKSHS.

A lipid anchor (N-myristoyl glycine) is attached at Gly2. Residues 23-132 (PRHAAPSSPS…AHIKRISSAG (110 aa)) form a disordered region. Low complexity predominate over residues 28–50 (PSSPSQPTTTSRSIPVVLPSAPS). Positions 51-100 (SKPPPPTQTAPPVPVVISEPPPPQPQPEPQPAAPSQPPPPQEQPSPPPPA) are enriched in pro residues. Basic residues predominate over residues 117–127 (SRAKKPAHIKR). Residues 150-408 (YSLGRKLGQG…AHEVLCHPWL (259 aa)) enclose the Protein kinase domain. ATP is bound by residues 156-164 (LGQGQFGTT) and Lys179. Catalysis depends on Asp274, which acts as the Proton acceptor. Residues 414–444 (APDKPLDSAVLSRLRQFSAMNKLKKMALRVI) form an autoinhibitory domain region. EF-hand domains follow at residues 451-486 (EEIA…VGAN), 487-522 (MKES…LNKV), 523-558 (ERED…FGIE), and 561-592 (RLED…TTTG). Ca(2+) is bound by residues Asp464, Asp466, Ser468, Gln470, Glu475, Asp500, Asp502, Ser504, Thr506, Glu511, Asp536, Asp538, Ser540, Tyr542, Glu547, Asp570, Asp572, Asp574, Arg576, and Glu581.

The protein belongs to the protein kinase superfamily. Ser/Thr protein kinase family. CDPK subfamily.

It localises to the membrane. It catalyses the reaction L-seryl-[protein] + ATP = O-phospho-L-seryl-[protein] + ADP + H(+). The enzyme catalyses L-threonyl-[protein] + ATP = O-phospho-L-threonyl-[protein] + ADP + H(+). Its activity is regulated as follows. Activated by calcium. Autophosphorylation may play an important role in the regulation of the kinase activity. In terms of biological role, may play a role in signal transduction pathways that involve calcium as a second messenger. The polypeptide is Calcium-dependent protein kinase 27 (Oryza sativa subsp. japonica (Rice)).